We begin with the raw amino-acid sequence, 549 residues long: E-selectin (549 aa).

An N-terminal signal peptide occupies residues 1-21; sequence MNASCFLSALTFVLLIGKSIA. The C-type lectin domain occupies 22-139; that stretch reads WYYNASSELM…CDKKKLALCY (118 aa). Residues 22 to 494 lie on the Extracellular side of the membrane; the sequence is WYYNASSELM…CEAPANPPRP (473 aa). 2 N-linked (GlcNAc...) asparagine glycosylation sites follow: N25 and N60. Disulfide bonds link C40–C138, C111–C130, C143–C154, C148–C163, C165–C174, C180–C225, C193–C206, C210–C238, C243–C287, C256–C269, C273–C300, C305–C350, C336–C363, C368–C413, C399–C426, C431–C472, and C458–C485. Ca(2+) is bound by residues E101, N103, and E109. A carbohydrate contacts are provided by residues 101-109, 113-118, and 126-128; these read EPNNKQRNE, EIYIQR, and NDE. 2 residues coordinate Ca(2+): N126 and D127. Residues 140–175 enclose the EGF-like domain; the sequence is TASCTNTSCSGHGECVETINSYTCKCHPGFLGPKCD. An N-linked (GlcNAc...) asparagine glycan is attached at N145. Sushi domains follow at residues 178-240, 241-302, 303-365, 366-428, and 429-487; these read VTCQ…ACHV, VECK…SCKA, VTCD…VCKA, SQCE…TCAG, and VQCS…TCEA. N192 and N203 each carry an N-linked (GlcNAc...) asparagine glycan. Residue N266 is glycosylated (N-linked (GlcNAc...) asparagine). N-linked (GlcNAc...) asparagine glycosylation is found at N313, N320, and N333. Residues N441 and N465 are each glycosylated (N-linked (GlcNAc...) asparagine). A helical membrane pass occupies residues 495–516; the sequence is LVVALSVAATSLLTLSSLIYVL. The Cytoplasmic portion of the chain corresponds to 517-549; the sequence is KRFFWKKAKKFVPASSCQSLQSFENYQGPSYII.

It belongs to the selectin/LECAM family. In terms of assembly, interacts with SELPLG/PSGL1 and PODXL2 through the sialyl Lewis X epitope. SELPLG sulfation appears not to be required for this interaction.

Its subcellular location is the cell membrane. Cell-surface glycoprotein having a role in immunoadhesion. Mediates in the adhesion of blood neutrophils in cytokine-activated endothelium through interaction with SELPLG/PSGL1. May have a role in capillary morphogenesis. The chain is E-selectin (Sele) from Rattus norvegicus (Rat).